The primary structure comprises 602 residues: Glutaminase liver isoform, mitochondrial (602 aa).

Residues 1–14 constitute a mitochondrion transit peptide; it reads MRSMRALQNALSRA. Disordered regions lie at residues 1 to 28 and 46 to 67; these read MRSM…HPSR and QGRG…SNSG. S219 contributes to the substrate binding site. K253 carries the post-translational modification N6-succinyllysine. N268 contributes to the substrate binding site. Residues K279 and K284 each carry the N6-acetyllysine modification. Residues E314 and N321 each coordinate substrate. The residue at position 329 (K329) is an N6-acetyllysine. Residues Y347, Y399, and V417 each contribute to the substrate site. 2 ANK repeats span residues 518–551 and 552–585; these read DSRT…VKDR and WGNI…SETQ.

Belongs to the glutaminase family. In terms of assembly, homotetramer, dimer of dimers. Does not assemble into higher oligomers. Interacts with the PDZ domain of the syntrophin SNTA1. Interacts with the PDZ domain of TAX1BP3. Liver specific.

Its subcellular location is the mitochondrion. The enzyme catalyses L-glutamine + H2O = L-glutamate + NH4(+). Functionally, plays an important role in the regulation of glutamine catabolism. Promotes mitochondrial respiration and increases ATP generation in cells by catalyzing the synthesis of glutamate and alpha-ketoglutarate. Increases cellular anti-oxidant function via NADH and glutathione production. May play a role in preventing tumor proliferation. This Rattus norvegicus (Rat) protein is Glutaminase liver isoform, mitochondrial (Gls2).